A 57-amino-acid chain; its full sequence is Large ribosomal subunit protein eL20 (57 aa).

The protein belongs to the eukaryotic ribosomal protein eL20 family. Part of the 50S ribosomal subunit. Binds 23S rRNA.

The chain is Large ribosomal subunit protein eL20 from Natronomonas pharaonis (strain ATCC 35678 / DSM 2160 / CIP 103997 / JCM 8858 / NBRC 14720 / NCIMB 2260 / Gabara) (Halobacterium pharaonis).